A 780-amino-acid chain; its full sequence is Kazrin (780 aa).

A coiled-coil region spans residues 79–261; that stretch reads AQVLLREEVV…LATLTKDVPK (183 aa). A disordered region spans residues 295–430; that stretch reads QQTLYHSHPP…TRHSLSLSEG (136 aa). 3 positions are modified to phosphoserine: Ser357, Ser372, and Ser392. Residues 416-427 are compositionally biased toward polar residues; sequence SQCSPTRHSLSL. SAM domains are found at residues 451–516, 529–593, and 617–684; these read WKAG…YRDA, DHHW…LYQV, and WTNQ…STVF. The tract at residues 692–780 is disordered; it reads IRESERFGTP…EYSSLEVTNV (89 aa). A compositionally biased stretch (basic and acidic residues) spans 760-771; it reads LQGRPEQCRLEE.

It belongs to the kazrin family.

It localises to the cell junction. It is found in the nucleus. Its subcellular location is the cytoplasm. The protein resides in the cytoskeleton. In terms of biological role, component of the cornified envelope of keratinocytes. May be involved in the interplay between adherens junctions and desmosomes. The function in the nucleus is not known. The polypeptide is Kazrin (Kazn) (Rattus norvegicus (Rat)).